A 126-amino-acid polypeptide reads, in one-letter code: Fluoride-specific ion channel FluC 2 (126 aa).

Transmembrane regions (helical) follow at residues 11–31 (IFLIGAGGFLGAICRFSLCEL), 43–63 (VLGSFMLGLIMYDTEYIGFIG), 69–89 (AFGTGFMGAFTTFSTFAVQSF), and 93–113 (FFPALENISVNLFLALVGVFM). Residues G76 and T79 each contribute to the Na(+) site.

Belongs to the fluoride channel Fluc/FEX (TC 1.A.43) family.

It is found in the cell membrane. The enzyme catalyses fluoride(in) = fluoride(out). With respect to regulation, na(+) is not transported, but it plays an essential structural role and its presence is essential for fluoride channel function. In terms of biological role, fluoride-specific ion channel. Important for reducing fluoride concentration in the cell, thus reducing its toxicity. The chain is Fluoride-specific ion channel FluC 2 from Methanosarcina barkeri (strain Fusaro / DSM 804).